A 307-amino-acid polypeptide reads, in one-letter code: 4-hydroxy-3-methylbut-2-enyl diphosphate reductase (307 aa).

Residue Cys13 participates in [4Fe-4S] cluster binding. The (2E)-4-hydroxy-3-methylbut-2-enyl diphosphate site is built by His42 and His75. Dimethylallyl diphosphate-binding residues include His42 and His75. His42 and His75 together coordinate isopentenyl diphosphate. Residue Cys97 coordinates [4Fe-4S] cluster. His125 is a (2E)-4-hydroxy-3-methylbut-2-enyl diphosphate binding site. His125 provides a ligand contact to dimethylallyl diphosphate. His125 contributes to the isopentenyl diphosphate binding site. Catalysis depends on Glu127, which acts as the Proton donor. Residue Thr165 coordinates (2E)-4-hydroxy-3-methylbut-2-enyl diphosphate. Position 195 (Cys195) interacts with [4Fe-4S] cluster. The (2E)-4-hydroxy-3-methylbut-2-enyl diphosphate site is built by Ser223, Ser224, Asn225, and Ser267. Positions 223, 224, 225, and 267 each coordinate dimethylallyl diphosphate. Ser223, Ser224, Asn225, and Ser267 together coordinate isopentenyl diphosphate.

It belongs to the IspH family. [4Fe-4S] cluster is required as a cofactor.

It carries out the reaction isopentenyl diphosphate + 2 oxidized [2Fe-2S]-[ferredoxin] + H2O = (2E)-4-hydroxy-3-methylbut-2-enyl diphosphate + 2 reduced [2Fe-2S]-[ferredoxin] + 2 H(+). It catalyses the reaction dimethylallyl diphosphate + 2 oxidized [2Fe-2S]-[ferredoxin] + H2O = (2E)-4-hydroxy-3-methylbut-2-enyl diphosphate + 2 reduced [2Fe-2S]-[ferredoxin] + 2 H(+). It participates in isoprenoid biosynthesis; dimethylallyl diphosphate biosynthesis; dimethylallyl diphosphate from (2E)-4-hydroxy-3-methylbutenyl diphosphate: step 1/1. The protein operates within isoprenoid biosynthesis; isopentenyl diphosphate biosynthesis via DXP pathway; isopentenyl diphosphate from 1-deoxy-D-xylulose 5-phosphate: step 6/6. Its function is as follows. Catalyzes the conversion of 1-hydroxy-2-methyl-2-(E)-butenyl 4-diphosphate (HMBPP) into a mixture of isopentenyl diphosphate (IPP) and dimethylallyl diphosphate (DMAPP). Acts in the terminal step of the DOXP/MEP pathway for isoprenoid precursor biosynthesis. The chain is 4-hydroxy-3-methylbut-2-enyl diphosphate reductase from Chlamydia trachomatis serovar L2 (strain ATCC VR-902B / DSM 19102 / 434/Bu).